The primary structure comprises 213 residues: Thymidylate kinase (213 aa).

Position 10–17 (10–17 (GLEGAGKT)) interacts with ATP.

It belongs to the thymidylate kinase family.

The enzyme catalyses dTMP + ATP = dTDP + ADP. Phosphorylation of dTMP to form dTDP in both de novo and salvage pathways of dTTP synthesis. This chain is Thymidylate kinase, found in Escherichia coli O6:H1 (strain CFT073 / ATCC 700928 / UPEC).